We begin with the raw amino-acid sequence, 101 residues long: NADH-quinone oxidoreductase subunit K (101 aa).

The next 3 helical transmembrane spans lie at Leu-4–Ile-24, Ile-30–Phe-50, and Ile-61–Leu-81.

This sequence belongs to the complex I subunit 4L family. As to quaternary structure, NDH-1 is composed of 14 different subunits. Subunits NuoA, H, J, K, L, M, N constitute the membrane sector of the complex.

Its subcellular location is the cell inner membrane. The catalysed reaction is a quinone + NADH + 5 H(+)(in) = a quinol + NAD(+) + 4 H(+)(out). In terms of biological role, NDH-1 shuttles electrons from NADH, via FMN and iron-sulfur (Fe-S) centers, to quinones in the respiratory chain. The immediate electron acceptor for the enzyme in this species is believed to be ubiquinone. Couples the redox reaction to proton translocation (for every two electrons transferred, four hydrogen ions are translocated across the cytoplasmic membrane), and thus conserves the redox energy in a proton gradient. The protein is NADH-quinone oxidoreductase subunit K of Coxiella burnetii (strain CbuG_Q212) (Coxiella burnetii (strain Q212)).